We begin with the raw amino-acid sequence, 357 residues long: Phenylalanine--tRNA ligase alpha subunit (357 aa).

Glutamate 257 contacts Mg(2+).

This sequence belongs to the class-II aminoacyl-tRNA synthetase family. Phe-tRNA synthetase alpha subunit type 1 subfamily. As to quaternary structure, tetramer of two alpha and two beta subunits. Mg(2+) serves as cofactor.

The protein resides in the cytoplasm. The catalysed reaction is tRNA(Phe) + L-phenylalanine + ATP = L-phenylalanyl-tRNA(Phe) + AMP + diphosphate + H(+). The sequence is that of Phenylalanine--tRNA ligase alpha subunit from Ruegeria sp. (strain TM1040) (Silicibacter sp.).